The chain runs to 264 residues: Potassium channel regulatory protein (264 aa).

One can recognise a BTB domain in the interval 5–74 (DLVTLNVGGR…LRNHELLLPS (70 aa)).

As to quaternary structure, can form homooligomers. Interacts with KCNA1 (via cytoplasmic N-terminal domain) and KCNA4.

It is found in the endoplasmic reticulum. Inhibits potassium fluxes in cells. May regulate Kv1 family channel proteins by retaining a fraction of channels in endomembranes. This is Potassium channel regulatory protein (Kcnrg) from Mus musculus (Mouse).